We begin with the raw amino-acid sequence, 143 residues long: Large ribosomal subunit protein uL15 (143 aa).

Positions 1–52 (MKLNTLAPAAGSKSAPKRLGRGIGSGLGKTSGKGHKGQKARSGGYHKVGFEG) are disordered. Gly residues predominate over residues 21-31 (RGIGSGLGKTS).

It belongs to the universal ribosomal protein uL15 family. In terms of assembly, part of the 50S ribosomal subunit.

Binds to the 23S rRNA. In Francisella tularensis subsp. holarctica (strain FTNF002-00 / FTA), this protein is Large ribosomal subunit protein uL15.